Consider the following 486-residue polypeptide: Cobyric acid synthase (486 aa).

In terms of domain architecture, GATase cobBQ-type spans 248 to 439 (VLRIVVPALP…LHGLFDTPHA (192 aa)). The active-site Nucleophile is Cys-328. The active site involves His-431.

The protein belongs to the CobB/CobQ family. CobQ subfamily.

It participates in cofactor biosynthesis; adenosylcobalamin biosynthesis. Its function is as follows. Catalyzes amidations at positions B, D, E, and G on adenosylcobyrinic A,C-diamide. NH(2) groups are provided by glutamine, and one molecule of ATP is hydrogenolyzed for each amidation. The chain is Cobyric acid synthase from Burkholderia mallei (strain ATCC 23344).